Reading from the N-terminus, the 94-residue chain is Integration host factor subunit beta (94 aa).

The protein belongs to the bacterial histone-like protein family. As to quaternary structure, heterodimer of an alpha and a beta chain.

This protein is one of the two subunits of integration host factor, a specific DNA-binding protein that functions in genetic recombination as well as in transcriptional and translational control. The sequence is that of Integration host factor subunit beta from Roseobacter denitrificans (strain ATCC 33942 / OCh 114) (Erythrobacter sp. (strain OCh 114)).